Here is a 791-residue protein sequence, read N- to C-terminus: Solute carrier family 26 member 9 (791 aa).

The Cytoplasmic segment spans residues 1-70 (MSQPRPRYVV…WLPKYKIKDY (70 aa)). A helical transmembrane segment spans residues 71–96 (IIPDLLGGLSGGSIQVPQGMAFALLA). The Extracellular segment spans residues 97–99 (NLP). A helical membrane pass occupies residues 100–117 (AVNGLYSSFFPLLTYFFL). Residues 118–128 (GGVHQMVPGTF) lie on the Cytoplasmic side of the membrane. A helical transmembrane segment spans residues 129-142 (AVISILVGNICLQL). Residues 143-171 (APESKFQVFNNATNESYVDTAAMEAERLH) lie on the Extracellular side of the membrane. A helical membrane pass occupies residues 172–190 (VSATLACLTAIIQMGLGFM). The Cytoplasmic segment spans residues 191–202 (QFGFVAIYLSES). The chain crosses the membrane as a helical span at residues 203 to 224 (FIRGFMTAAGLQILISVLKYIF). Over 225–235 (GLTIPSYTGPG) the chain is Extracellular. An intramembrane region (helical) is located at residues 236-244 (SIVFTFIDI). Residues 245 to 254 (CKNLPHTNIA) are Extracellular-facing. Residues 255 to 273 (SLIFALISGAFLVLVKELN) form a helical membrane-spanning segment. Over 274-281 (ARYMHKIR) the chain is Cytoplasmic. Residues 282–297 (FPIPTEMIVVVVATAI) form a helical membrane-spanning segment. Topologically, residues 298–327 (SGGCKMPKKYHMQIVGEIQRGFPTPVSPVV) are extracellular. A helical membrane pass occupies residues 328 to 348 (SQWKDMIGTAFSLAIVSYVIN). The Cytoplasmic portion of the chain corresponds to 349 to 366 (LAMGRTLANKHGYDVDSN). A helical transmembrane segment spans residues 367-382 (QEMIALGCSNFFGSFF). The Extracellular segment spans residues 383–390 (KIHVICCA). The helical transmembrane segment at 391-400 (LSVTLAVDGA) threads the bilayer. Over 401–404 (GGKS) the chain is Cytoplasmic. Residues 405-423 (QVASLCVSLVVMITMLVLG) traverse the membrane as a helical segment. At 424 to 428 (IYLYP) the chain is on the extracellular side. The helical transmembrane segment at 429-450 (LPKSVLGALIAVNLKNSLKQLT) threads the bilayer. Over 451-464 (DPYYLWRKSKLDCC) the chain is Cytoplasmic. Residues 465-476 (IWVVSFLSSFFL) traverse the membrane as a helical segment. Position 477 (S477) is a topological domain, extracellular. Residues 478–489 (LPYGVAVGVAFS) traverse the membrane as a helical segment. The Cytoplasmic segment spans residues 490 to 791 (VLVVVFQTQF…MFHAETLTAL (302 aa)). Positions 519–737 (TYNRAQDIQG…PSIHDAVLFA (219 aa)) constitute an STAS domain. Residues 602-650 (FENAPPTDPNNNQTPANGTSVSYITFSPDSSSPAQSEPPASAEAPGEPS) are disordered. Polar residues predominate over residues 610–626 (PNNNQTPANGTSVSYIT). Over residues 628–650 (SPDSSSPAQSEPPASAEAPGEPS) the composition is skewed to low complexity.

It belongs to the SLC26A/SulP transporter (TC 2.A.53) family. As to quaternary structure, homodimer. Predominantly expressed in lung at the luminal side of the bronchiolar and alveolar epithelium of lung. To a lower extent, also expressed in pancreas and prostate.

It is found in the cell membrane. It localises to the endomembrane system. It carries out the reaction chloride(in) = chloride(out). It catalyses the reaction hydrogencarbonate(in) + chloride(out) = hydrogencarbonate(out) + chloride(in). Its activity is regulated as follows. Inhibited by ammonium and thiosulfate. Ion transporter that can act both as an ion channel and anion exchanger. Mainly acts as a chloride channel, which mediate uncoupled chloride anion transport in an alternate-access mechanism where a saturable binding site is alternately exposed to either one or the other side of the membrane. Also acts as a DIDS- and thiosulfate- sensitive anion exchanger the exchange of chloride for bicarbonate ions across the cell membrane. This chain is Solute carrier family 26 member 9, found in Homo sapiens (Human).